A 301-amino-acid chain; its full sequence is Small ribosomal subunit protein uS3 (301 aa).

A KH type-2 domain is found at 39 to 107; the sequence is VREYLKAKLK…PVAVNIEEVR (69 aa). The segment at 211 to 301 is disordered; sequence GESPGAKLDA…AAAADGTKTE (91 aa). Over residues 224–244 the composition is skewed to basic and acidic residues; it reads DEERKPRGPRRDARPGSDRPA. Residues 245 to 257 show a composition bias toward low complexity; the sequence is PRGARAPRAPAGG.

The protein belongs to the universal ribosomal protein uS3 family. In terms of assembly, part of the 30S ribosomal subunit. Forms a tight complex with proteins S10 and S14.

Binds the lower part of the 30S subunit head. Binds mRNA in the 70S ribosome, positioning it for translation. In Polaromonas sp. (strain JS666 / ATCC BAA-500), this protein is Small ribosomal subunit protein uS3.